Here is a 35-residue protein sequence, read N- to C-terminus: Small toxic polypeptide LdrD (35 aa).

A helical transmembrane segment spans residues 10 to 32 (FWHDLAAPVIAGILASMIVNWLN).

It belongs to the Ldr toxic peptide family.

The protein localises to the cell inner membrane. In terms of biological role, toxic component of a type I toxin-antitoxin (TA) system. Overexpression causes rapid cell killing and nucleoid condensation of the host cell. Overexpression induces stress-response and a number of membrane protein genes. May inhibit ATP synthesis due to its insertion in the cell inner membrane. The chain is Small toxic polypeptide LdrD (ldrD) from Escherichia coli (strain K12).